A 296-amino-acid polypeptide reads, in one-letter code: Methylsterol monooxygenase erg25B (296 aa).

3 consecutive transmembrane segments (helical) span residues 50–70, 98–118, and 125–145; these read IMSF…WILI, FVLL…HPMA, and TSVP…FFVL. Residues 140–276 enclose the Fatty acid hydroxylase domain; the sequence is AIFFVLEDTW…FRWWDYLLDT (137 aa). The Histidine box-1 motif lies at 154–158; it reads HRALH. A Histidine box-2 motif is present at residues 167–171; it reads HKIHH. A helical transmembrane segment spans residues 201–221; the sequence is ILWCALTGDLHIFTMYVWIVL. The Histidine box-3 signature appears at 251-257; that stretch reads HHDLHHE.

It belongs to the sterol desaturase family. Fe cation serves as cofactor.

It is found in the endoplasmic reticulum membrane. Its pathway is steroid metabolism; ergosterol biosynthesis. Functionally, sterol-C4-methyl oxidase; part of the third module of ergosterol biosynthesis pathway that includes the late steps of the pathway. Erg25B is a catalytic component of the C-4 demethylation complex that catalyzes the conversion of 4,4-dimethylfecosterol into fecosterol via 4-methylfecosterol. The third module or late pathway involves the ergosterol synthesis itself through consecutive reactions that mainly occur in the endoplasmic reticulum (ER) membrane. Firstly, the squalene synthase erg9 catalyzes the condensation of 2 farnesyl pyrophosphate moieties to form squalene, which is the precursor of all steroids. Squalene synthase is crucial for balancing the incorporation of farnesyl diphosphate (FPP) into sterol and nonsterol isoprene synthesis. Secondly, squalene is converted into lanosterol by the consecutive action of the squalene epoxidase erg1 and the lanosterol synthase erg7. Then, the delta(24)-sterol C-methyltransferase erg6 methylates lanosterol at C-24 to produce eburicol. Eburicol is the substrate of the sterol 14-alpha demethylase encoded by cyp51A and cyp51B, to yield 4,4,24-trimethyl ergosta-8,14,24(28)-trienol. The C-14 reductase erg24 then reduces the C14=C15 double bond which leads to 4,4-dimethylfecosterol. A sequence of further demethylations at C-4, involving the C-4 demethylation complex containing the C-4 methylsterol oxidases erg25A or erg25B, the sterol-4-alpha-carboxylate 3-dehydrogenase erg26 and the 3-keto-steroid reductase erg27, leads to the production of fecosterol via 4-methylfecosterol. The C-8 sterol isomerase erg2 then catalyzes the reaction which results in unsaturation at C-7 in the B ring of sterols and thus converts fecosterol to episterol. The sterol-C5-desaturase erg3B then catalyzes the introduction of a C-5 double bond in the B ring to produce 5-dehydroepisterol. The 2 other sterol-C5-desaturases, erg3A and erg3C, seem to be less important in ergosterol biosynthesis. The C-22 sterol desaturase erg5 further converts 5-dehydroepisterol into ergosta-5,7,22,24(28)-tetraen-3beta-ol by forming the C-22(23) double bond in the sterol side chain. Finally, ergosta-5,7,22,24(28)-tetraen-3beta-ol is substrate of the C-24(28) sterol reductases erg4A and erg4B to produce ergosterol. Possible alternative sterol biosynthetic pathways might exist from fecosterol to ergosterol, depending on the activities of the erg3 isoforms. This is Methylsterol monooxygenase erg25B from Aspergillus fumigatus (strain ATCC MYA-4609 / CBS 101355 / FGSC A1100 / Af293) (Neosartorya fumigata).